A 210-amino-acid chain; its full sequence is ATP-dependent dethiobiotin synthetase BioD (210 aa).

Residue 13–18 (GIGKTV) participates in ATP binding. Residue Thr17 participates in Mg(2+) binding. The active site involves Lys33. Glu101 is a binding site for Mg(2+). ATP contacts are provided by residues 101–104 (EGAG) and 185–187 (PWL).

Belongs to the dethiobiotin synthetase family. As to quaternary structure, homodimer. Mg(2+) serves as cofactor.

It is found in the cytoplasm. The catalysed reaction is (7R,8S)-7,8-diammoniononanoate + CO2 + ATP = (4R,5S)-dethiobiotin + ADP + phosphate + 3 H(+). It functions in the pathway cofactor biosynthesis; biotin biosynthesis; biotin from 7,8-diaminononanoate: step 1/2. Functionally, catalyzes a mechanistically unusual reaction, the ATP-dependent insertion of CO2 between the N7 and N8 nitrogen atoms of 7,8-diaminopelargonic acid (DAPA, also called 7,8-diammoniononanoate) to form a ureido ring. This chain is ATP-dependent dethiobiotin synthetase BioD, found in Bradyrhizobium sp. (strain BTAi1 / ATCC BAA-1182).